The sequence spans 325 residues: GMP reductase (325 aa).

C174 functions as the Thioimidate intermediate in the catalytic mechanism. NADP(+) is bound at residue I203–V226.

This sequence belongs to the IMPDH/GMPR family. GuaC type 2 subfamily.

It carries out the reaction IMP + NH4(+) + NADP(+) = GMP + NADPH + 2 H(+). Functionally, catalyzes the irreversible NADPH-dependent deamination of GMP to IMP. It functions in the conversion of nucleobase, nucleoside and nucleotide derivatives of G to A nucleotides, and in maintaining the intracellular balance of A and G nucleotides. This is GMP reductase from Latilactobacillus sakei subsp. sakei (strain 23K) (Lactobacillus sakei subsp. sakei).